Reading from the N-terminus, the 318-residue chain is Pyrimidine-specific ribonucleoside hydrolase RihA (318 aa).

Histidine 240 is an active-site residue.

This sequence belongs to the IUNH family. RihA subfamily.

In terms of biological role, hydrolyzes cytidine or uridine to ribose and cytosine or uracil, respectively. The protein is Pyrimidine-specific ribonucleoside hydrolase RihA of Shewanella sp. (strain ANA-3).